The sequence spans 49 residues: uncharacterized protein (49 aa).

Residues 20–42 (LFLVGLTIGKMATSRILSFLGFI) form a helical membrane-spanning segment.

Its subcellular location is the membrane. This is an uncharacterized protein from Dictyostelium discoideum (Social amoeba).